The following is a 468-amino-acid chain: Uronate isomerase (468 aa).

It belongs to the metallo-dependent hydrolases superfamily. Uronate isomerase family.

It carries out the reaction D-glucuronate = D-fructuronate. It catalyses the reaction aldehydo-D-galacturonate = keto-D-tagaturonate. Its pathway is carbohydrate metabolism; pentose and glucuronate interconversion. This chain is Uronate isomerase, found in Bacteroides thetaiotaomicron (strain ATCC 29148 / DSM 2079 / JCM 5827 / CCUG 10774 / NCTC 10582 / VPI-5482 / E50).